Consider the following 752-residue polypeptide: BCLAF1 and THRAP3 family member 3 (752 aa).

A compositionally biased stretch (basic residues) spans 1–13 (MARSRSRSPRWKQ). Disordered regions lie at residues 1 to 114 (MARS…YMPT), 132 to 177 (PTVQ…QMSL), and 190 to 252 (DELR…DPAR). 2 positions are modified to phosphoserine: Ser15 and Ser17. The span at 23–57 (FEYHEERHFHGHYDPEYRHDQQRPFTWRMDDEKHG) shows a compositional bias: basic and acidic residues. Residues Ser78 and Ser80 each carry the phosphoserine modification. The segment covering 85–109 (PVEKFDTYKPHQEYFPGRGDDDRRS) has biased composition (basic and acidic residues). Basic and acidic residues predominate over residues 190-199 (DELRHQRVQE). Ser205 carries the phosphoserine modification. Composition is skewed to basic and acidic residues over residues 222-231 (RYPEDHDFRK) and 238-252 (RPTD…DPAR). A Glycyl lysine isopeptide (Lys-Gly) (interchain with G-Cter in SUMO2) cross-link involves residue Lys416. Ser592 is subject to Phosphoserine.

This sequence belongs to the BCLAF1/THRAP3 family.

It is found in the mitochondrion. This is BCLAF1 and THRAP3 family member 3 from Mus musculus (Mouse).